A 252-amino-acid polypeptide reads, in one-letter code: JmjC domain-containing protein A (252 aa).

The region spanning 103-252 is the JmjC domain; the sequence is PYLRNFGMLD…VSCWGKEMIM (150 aa).

The chain is JmjC domain-containing protein A (jcdA) from Dictyostelium discoideum (Social amoeba).